Consider the following 488-residue polypeptide: MEALNARFNVLQEMLMDIYESGKEDLETQIEHWKLLRQEQALLFFARKHSIMRLGYQPVPPMAVSETKAKQAIGMMLTLQSLQKSPFGKEKWTLVNTSLETYNAPPAQCFKKGPYNIEVIFDGDPENLMVYTAWKEIYFVDSDDMWQKVQGEVDYAGAYYKDGTIKQYYVTFADDAVRYGTSGQYEVRINNETVFAPVTSSTPPSTGLRESSNASPVHDTVDETPTSTTATTTTFSTTTATATATGAPELSSKTGTRKGRYGRKDSSPTAASNSRKEVSRRRSRSRTRTRRREASTSRSQKASRSRSRSRSTSRGSRGSGGSVTTSRDSSPKRTRRGRGRGGRSRRSPTPTSTSKRERRRSRSRGGEPVSGGVGISPDKVGSRVQTVSGRHLGRLGRLLEEASDPPVILLRGDPNILKCYRYRDKKRKLGLVKHYSTTWSWVGVDGNERIGRSRMLLSFTSNSTRSQYVKIMKLPKGVEWSFGNFDKL.

The transactivation domain stretch occupies residues 1–201 (MEALNARFNV…ETVFAPVTSS (201 aa)). Residues 196 to 215 (APVTSSTPPSTGLRESSNAS) show a composition bias toward polar residues. The disordered stretch occupies residues 196 to 384 (APVTSSTPPS…ISPDKVGSRV (189 aa)). The span at 224–245 (TPTSTTATTTTFSTTTATATAT) shows a compositional bias: low complexity. 2 stretches are compositionally biased toward basic residues: residues 278-291 (VSRRRSRSRTRTRR) and 301-311 (KASRSRSRSRS). Positions 312–328 (TSRGSRGSGGSVTTSRD) are enriched in low complexity. Positions 332–346 (KRTRRGRGRGGRSRR) are enriched in basic residues. A DNA-binding domain region spans residues 404-488 (DPPVILLRGD…EWSFGNFDKL (85 aa)).

The protein belongs to the papillomaviridae E2 protein family. As to quaternary structure, binds DNA as homodimer. Interacts with protein E1; this interaction greatly increases E1 DNA-binding activity. Interacts with protein L1; this interaction enhances E2-dependent replication and transcription activation. Interacts with protein L2; this interaction inhibits E2 transcriptional activity but not DNA replication function E2. Interacts with protein E7; this interaction inhibits E7 oncogenic activity. Interacts with host TAF1; this interaction modulates E2-dependent transcriptional regulation. Interacts with host BRD4; this interaction mediates E2 transcriptional activation function. Additionally, the interaction with host BRD4 on mitotic chromosomes mediates tethering of the viral genome. Interacts with host TOPBP1; this interaction is required for optimal viral DNA replication. In terms of processing, phosphorylated.

Its subcellular location is the host nucleus. Functionally, plays a role in the initiation of viral DNA replication. A dimer of E2 interacts with a dimer of E1 in order to improve specificity of E1 DNA binding activity. Once the complex recognizes and binds DNA at specific sites, the E2 dimer is removed from DNA. E2 also regulates viral transcription through binding to the E2RE response element (5'-ACCNNNNNNGGT-3') present in multiple copies in the regulatory regions of the viral genome. Activates or represses transcription depending on E2RE's position with regards to proximal promoter elements including the TATA-box. Repression occurs by sterically hindering the assembly of the transcription initiation complex. The sequence is that of Regulatory protein E2 from Homo sapiens (Human).